A 392-amino-acid chain; its full sequence is Formate-dependent phosphoribosylglycinamide formyltransferase (392 aa).

Residues 22–23 and Glu82 each bind N(1)-(5-phospho-beta-D-ribosyl)glycinamide; that span reads EL. ATP-binding positions include Arg114, Lys155, 160–165, 195–198, and Glu203; these read SSGKGQ and EKII. One can recognise an ATP-grasp domain in the interval 119–308; that stretch reads VLVSKKLNIL…EFALHVRSFL (190 aa). Residues Glu267 and Glu279 each contribute to the Mg(2+) site. N(1)-(5-phospho-beta-D-ribosyl)glycinamide-binding positions include Asp286, Lys355, and 362–363; that span reads RR.

Belongs to the PurK/PurT family. In terms of assembly, homodimer.

It catalyses the reaction N(1)-(5-phospho-beta-D-ribosyl)glycinamide + formate + ATP = N(2)-formyl-N(1)-(5-phospho-beta-D-ribosyl)glycinamide + ADP + phosphate + H(+). It participates in purine metabolism; IMP biosynthesis via de novo pathway; N(2)-formyl-N(1)-(5-phospho-D-ribosyl)glycinamide from N(1)-(5-phospho-D-ribosyl)glycinamide (formate route): step 1/1. In terms of biological role, involved in the de novo purine biosynthesis. Catalyzes the transfer of formate to 5-phospho-ribosyl-glycinamide (GAR), producing 5-phospho-ribosyl-N-formylglycinamide (FGAR). Formate is provided by PurU via hydrolysis of 10-formyl-tetrahydrofolate. This Wigglesworthia glossinidia brevipalpis protein is Formate-dependent phosphoribosylglycinamide formyltransferase.